The primary structure comprises 400 residues: 3-phenylpropionate/cinnamic acid dioxygenase ferredoxin--NAD(+) reductase component (400 aa).

5–36 (TIIIVGGGQAAAMAAASLRQQGFTGELHLFSD) is a binding site for FAD. Residue 146-174 (SVVIVGAGTIGLELAASATQRGCKVTVIE) coordinates NAD(+).

It belongs to the bacterial ring-hydroxylating dioxygenase ferredoxin reductase family. In terms of assembly, this dioxygenase system consists of four proteins: the two subunits of the hydroxylase component (HcaE and HcaF), a ferredoxin (HcaC) and a ferredoxin reductase (HcaD). FAD serves as cofactor.

It catalyses the reaction 2 reduced [2Fe-2S]-[ferredoxin] + NAD(+) + H(+) = 2 oxidized [2Fe-2S]-[ferredoxin] + NADH. Its pathway is aromatic compound metabolism; 3-phenylpropanoate degradation. Functionally, part of the multicomponent 3-phenylpropionate dioxygenase, that converts 3-phenylpropionic acid (PP) and cinnamic acid (CI) into 3-phenylpropionate-dihydrodiol (PP-dihydrodiol) and cinnamic acid-dihydrodiol (CI-dihydrodiol), respectively. This Escherichia coli (strain SMS-3-5 / SECEC) protein is 3-phenylpropionate/cinnamic acid dioxygenase ferredoxin--NAD(+) reductase component.